Here is a 95-residue protein sequence, read N- to C-terminus: Small ribosomal subunit protein bS16 (95 aa).

This sequence belongs to the bacterial ribosomal protein bS16 family.

The chain is Small ribosomal subunit protein bS16 from Thermotoga neapolitana (strain ATCC 49049 / DSM 4359 / NBRC 107923 / NS-E).